Consider the following 154-residue polypeptide: 6,7-dimethyl-8-ribityllumazine synthase (154 aa).

5-amino-6-(D-ribitylamino)uracil contacts are provided by residues phenylalanine 22, 56 to 58, and 80 to 82; these read AFE and AVI. Residue 85-86 coordinates (2S)-2-hydroxy-3-oxobutyl phosphate; it reads AT. Histidine 88 acts as the Proton donor in catalysis. Phenylalanine 113 is a binding site for 5-amino-6-(D-ribitylamino)uracil. Arginine 127 provides a ligand contact to (2S)-2-hydroxy-3-oxobutyl phosphate.

The protein belongs to the DMRL synthase family. In terms of assembly, forms an icosahedral capsid composed of 60 subunits, arranged as a dodecamer of pentamers.

It catalyses the reaction (2S)-2-hydroxy-3-oxobutyl phosphate + 5-amino-6-(D-ribitylamino)uracil = 6,7-dimethyl-8-(1-D-ribityl)lumazine + phosphate + 2 H2O + H(+). It functions in the pathway cofactor biosynthesis; riboflavin biosynthesis; riboflavin from 2-hydroxy-3-oxobutyl phosphate and 5-amino-6-(D-ribitylamino)uracil: step 1/2. Its function is as follows. Catalyzes the formation of 6,7-dimethyl-8-ribityllumazine by condensation of 5-amino-6-(D-ribitylamino)uracil with 3,4-dihydroxy-2-butanone 4-phosphate. This is the penultimate step in the biosynthesis of riboflavin. The polypeptide is 6,7-dimethyl-8-ribityllumazine synthase (Geobacillus thermodenitrificans (strain NG80-2)).